The sequence spans 168 residues: Small ribosomal subunit protein uS5 (168 aa).

The S5 DRBM domain maps to 14–77 (FEERVVSINR…EAAKKNLITV (64 aa)).

It belongs to the universal ribosomal protein uS5 family. Part of the 30S ribosomal subunit. Contacts proteins S4 and S8.

Functionally, with S4 and S12 plays an important role in translational accuracy. In terms of biological role, located at the back of the 30S subunit body where it stabilizes the conformation of the head with respect to the body. The chain is Small ribosomal subunit protein uS5 from Lactococcus lactis subsp. cremoris (strain MG1363).